Reading from the N-terminus, the 132-residue chain is Small ribosomal subunit protein uS8c (132 aa).

Belongs to the universal ribosomal protein uS8 family. In terms of assembly, part of the 30S ribosomal subunit.

It is found in the plastid. The protein resides in the chloroplast. One of the primary rRNA binding proteins, it binds directly to 16S rRNA central domain where it helps coordinate assembly of the platform of the 30S subunit. The polypeptide is Small ribosomal subunit protein uS8c (rps8) (Thalassiosira pseudonana (Marine diatom)).